The following is a 143-amino-acid chain: Cofilin (143 aa).

Ser4 carries the phosphoserine modification. The 133-residue stretch at 5-137 (GVAVADESLT…SYDSVLERVS (133 aa)) folds into the ADF-H domain.

The protein belongs to the actin-binding proteins ADF family. As to quaternary structure, interacts with actin and AIP1 in a ternary complex. Post-translationally, the N-terminus is blocked.

The protein resides in the cytoplasm. The protein localises to the cytoskeleton. Its subcellular location is the nucleus matrix. Functionally, controls reversibly actin polymerization and depolymerization in a pH-sensitive manner. It has the ability to bind G- and F-actin in a 1:1 ratio of cofilin to actin. Binding to F-actin is regulated by tropomyosin. It is the major component of intranuclear and cytoplasmic actin rods. Required for accumulation of actin at the cell division site via depolymerizing actin at the cell ends. In association with myosin II has a role in the assembly of the contractile ring via severing actin filaments. Involved in the maintenance of the contractile ring once formed. In association with profilin and capping protein, has a role in the mitotic reorganization of the actin cytoskeleton. In effect, yeast cofilin increases the rate of actin polymerization by making new ends available for actin subunit addition. Such a protein complex is important for the polarized growth of yeast cells. This is Cofilin (COF1) from Saccharomyces cerevisiae (strain ATCC 204508 / S288c) (Baker's yeast).